The sequence spans 376 residues: Chaperone protein DnaJ (376 aa).

One can recognise a J domain in the interval 5–70 (DYYEVLGLSK…QKKANYDQFG (66 aa)). The CR-type zinc finger occupies 133 to 215 (GVEKEISITR…CHGKGTVRKN (83 aa)). The Zn(2+) site is built by cysteine 146, cysteine 149, cysteine 163, cysteine 166, cysteine 189, cysteine 192, cysteine 203, and cysteine 206. CXXCXGXG motif repeat units lie at residues 146 to 153 (CDTCAGSG), 163 to 170 (CDKCGGTG), 189 to 196 (CDKCGGSG), and 203 to 210 (CTTCHGKG).

Belongs to the DnaJ family. In terms of assembly, homodimer. Zn(2+) serves as cofactor.

It is found in the cytoplasm. Participates actively in the response to hyperosmotic and heat shock by preventing the aggregation of stress-denatured proteins and by disaggregating proteins, also in an autonomous, DnaK-independent fashion. Unfolded proteins bind initially to DnaJ; upon interaction with the DnaJ-bound protein, DnaK hydrolyzes its bound ATP, resulting in the formation of a stable complex. GrpE releases ADP from DnaK; ATP binding to DnaK triggers the release of the substrate protein, thus completing the reaction cycle. Several rounds of ATP-dependent interactions between DnaJ, DnaK and GrpE are required for fully efficient folding. Also involved, together with DnaK and GrpE, in the DNA replication of plasmids through activation of initiation proteins. This is Chaperone protein DnaJ from Clostridium novyi (strain NT).